Consider the following 183-residue polypeptide: Inner membrane-spanning protein YciB (183 aa).

A run of 5 helical transmembrane segments spans residues 19–39 (LYGVQQAAITLVIATVIQLIV), 53–73 (IMGIFAVFFGILTAYFNDLNF), 76–96 (WKVTIINGLFAAVLLVSQFVF), 121–141 (LGWAGFFIICMLLNIVISYYF), and 151–171 (TFGFTGLSLIAAIATGVYLYP).

The protein belongs to the YciB family.

It is found in the cell inner membrane. In terms of biological role, plays a role in cell envelope biogenesis, maintenance of cell envelope integrity and membrane homeostasis. The polypeptide is Inner membrane-spanning protein YciB (Actinobacillus pleuropneumoniae serotype 5b (strain L20)).